A 369-amino-acid polypeptide reads, in one-letter code: Uroporphyrinogen decarboxylase (369 aa).

Substrate-binding positions include 36–40, Asp-86, Tyr-162, Ser-217, and His-342; that span reads RQAGR.

Belongs to the uroporphyrinogen decarboxylase family. Homodimer.

Its subcellular location is the cytoplasm. The enzyme catalyses uroporphyrinogen III + 4 H(+) = coproporphyrinogen III + 4 CO2. The protein operates within porphyrin-containing compound metabolism; protoporphyrin-IX biosynthesis; coproporphyrinogen-III from 5-aminolevulinate: step 4/4. Its function is as follows. Catalyzes the decarboxylation of four acetate groups of uroporphyrinogen-III to yield coproporphyrinogen-III. The chain is Uroporphyrinogen decarboxylase from Albidiferax ferrireducens (strain ATCC BAA-621 / DSM 15236 / T118) (Rhodoferax ferrireducens).